Here is a 543-residue protein sequence, read N- to C-terminus: CBS domain-containing protein CBSCBSPB1 (543 aa).

Positions Met-1–Gly-35 are disordered. Ser-17 is modified (phosphoserine). Residues Lys-23–Gly-35 show a composition bias toward basic and acidic residues. 4 CBS domains span residues Arg-59–Glu-118, Met-125–Glu-183, Ile-225–Ser-285, and Met-293–Thr-350. The disordered stretch occupies residues Leu-372–Ala-393. The 88-residue stretch at Ala-402–Ser-489 folds into the PB1 domain. Residues Ala-518–Leu-538 form a helical membrane-spanning segment.

The protein resides in the membrane. The chain is CBS domain-containing protein CBSCBSPB1 (CBSCBSPB1) from Arabidopsis thaliana (Mouse-ear cress).